The sequence spans 1828 residues: Dedicator of cytokinesis protein 2 (1828 aa).

The SH3 domain occupies 8–69 (DKERHGVAIY…PTSFIHLKEV (62 aa)). Lysine 304 is subject to N6-acetyllysine. Positions 423–607 (RNDIYITLLQ…DVFSISTLVC (185 aa)) constitute a C2 DOCK-type domain. Phosphoserine is present on residues serine 588 and serine 593. Lysine 738 is subject to N6-acetyllysine. A DOCKER domain is found at 1210 to 1621 (YKDNNREEMY…VEKEYGVREM (412 aa)). Residues 1652–1703 (SDCSTPSKVPAESFDLESAPPKTPKVEEEPISPGSTLPEVKLRRSKKRTKRS) are disordered. 4 positions are modified to phosphoserine: serine 1683, serine 1704, serine 1729, and serine 1782.

It belongs to the DOCK family. In terms of assembly, homodimer. Interacts with RAC1 and RAC2. Interacts with CRKL and VAV. Interacts with CD3Z. In terms of tissue distribution, specifically expressed in hematopoietic cells.

The protein localises to the endomembrane system. It localises to the cytoplasm. The protein resides in the cytoskeleton. In terms of biological role, involved in cytoskeletal rearrangements required for lymphocyte migration in response of chemokines. Activates RAC1 and RAC2, but not CDC42, by functioning as a guanine nucleotide exchange factor (GEF), which exchanges bound GDP for free GTP. May also participate in IL2 transcriptional activation via the activation of RAC2. The polypeptide is Dedicator of cytokinesis protein 2 (Dock2) (Mus musculus (Mouse)).